A 648-amino-acid polypeptide reads, in one-letter code: Primary amine oxidase (648 aa).

Residues 1 to 9 constitute a propeptide that is removed on maturation; it reads MTLNAESEA. Substrate is bound at residue 299 to 310; that stretch reads AFDSGEYNIGNM. The Proton acceptor role is filled by Asp-301. Cys-320 and Cys-346 form a disulfide bridge. 382-387 serves as a coordination point for substrate; that stretch reads VANYEY. Tyr-385 functions as the Schiff-base intermediate with substrate; via topaquinone in the catalytic mechanism. The residue at position 385 (Tyr-385) is a 2',4',5'-topaquinone. Positions 436 and 438 each coordinate Cu cation. Mn(2+)-binding residues include Asp-445, Phe-446, and Asp-584. Position 595 (His-595) interacts with Cu cation.

It belongs to the copper/topaquinone oxidase family. As to quaternary structure, homodimer. Cu cation serves as cofactor. The cofactor is Zn(2+). Requires L-topaquinone as cofactor. It depends on Mn(2+) as a cofactor. In terms of processing, topaquinone (TPQ) is generated by copper-dependent autoxidation of a specific tyrosyl residue.

It carries out the reaction a primary methyl amine + O2 + H2O = an aldehyde + H2O2 + NH4(+). Functionally, the exact function of MaoXI is not known. In Arthrobacter sp. (strain P1), this protein is Primary amine oxidase (maoI).